A 622-amino-acid polypeptide reads, in one-letter code: 1-deoxy-D-xylulose-5-phosphate synthase (622 aa).

Residues H80 and 121 to 123 (GHS) each bind thiamine diphosphate. Residue D152 coordinates Mg(2+). Residues 153-154 (GA), N181, Y288, and E370 each bind thiamine diphosphate. Residue N181 participates in Mg(2+) binding.

The protein belongs to the transketolase family. DXPS subfamily. Homodimer. Requires Mg(2+) as cofactor. The cofactor is thiamine diphosphate.

It carries out the reaction D-glyceraldehyde 3-phosphate + pyruvate + H(+) = 1-deoxy-D-xylulose 5-phosphate + CO2. It functions in the pathway metabolic intermediate biosynthesis; 1-deoxy-D-xylulose 5-phosphate biosynthesis; 1-deoxy-D-xylulose 5-phosphate from D-glyceraldehyde 3-phosphate and pyruvate: step 1/1. Catalyzes the acyloin condensation reaction between C atoms 2 and 3 of pyruvate and glyceraldehyde 3-phosphate to yield 1-deoxy-D-xylulose-5-phosphate (DXP). The chain is 1-deoxy-D-xylulose-5-phosphate synthase from Shewanella amazonensis (strain ATCC BAA-1098 / SB2B).